Consider the following 344-residue polypeptide: tRNA N6-adenosine threonylcarbamoyltransferase (344 aa).

Fe cation is bound by residues H111 and H115. Substrate-binding positions include L133–G137, D166, G179, and N283. D311 is a binding site for Fe cation.

It belongs to the KAE1 / TsaD family. Fe(2+) serves as cofactor.

Its subcellular location is the cytoplasm. It carries out the reaction L-threonylcarbamoyladenylate + adenosine(37) in tRNA = N(6)-L-threonylcarbamoyladenosine(37) in tRNA + AMP + H(+). Its function is as follows. Required for the formation of a threonylcarbamoyl group on adenosine at position 37 (t(6)A37) in tRNAs that read codons beginning with adenine. Is involved in the transfer of the threonylcarbamoyl moiety of threonylcarbamoyl-AMP (TC-AMP) to the N6 group of A37, together with TsaE and TsaB. TsaD likely plays a direct catalytic role in this reaction. In Orientia tsutsugamushi (strain Ikeda) (Rickettsia tsutsugamushi), this protein is tRNA N6-adenosine threonylcarbamoyltransferase.